A 254-amino-acid polypeptide reads, in one-letter code: Homeobox protein Nkx-6.3 (254 aa).

Disordered stretches follow at residues 112–140 and 191–228; these read QDWR…RPTF and KSAV…DPDS. The span at 120-129 shows a compositional bias: polar residues; sequence ALSSASNTEG. The segment at residues 133-192 is a DNA-binding region (homeobox); it reads KKHTRPTFTGHQIFALEKTFEQTKYLAGPERARLAFSLGMSESQVKVWFQNRRTKWRKKS.

Its subcellular location is the nucleus. In terms of biological role, putative transcription factor, which may be involved in patterning of central nervous system and pancreas. The chain is Homeobox protein Nkx-6.3 (nkx6-3) from Xenopus laevis (African clawed frog).